The following is a 670-amino-acid chain: UvrABC system protein B (670 aa).

Residues 26 to 183 (NGLKSGLAFQ…QRLVDLQYNR (158 aa)) form the Helicase ATP-binding domain. 39–46 (GVTGSGKT) provides a ligand contact to ATP. A Beta-hairpin motif is present at residues 92–115 (YYDYYQPEAYVPSSDSFIEKDAAI). Residues 431–597 (QVDDLLSEIN…GLSKQVNDVM (167 aa)) form the Helicase C-terminal domain. In terms of domain architecture, UVR spans 630–665 (LKQIALSEKQMFACAKNLEFEKAALFRDEVTKLHEQ).

This sequence belongs to the UvrB family. In terms of assembly, forms a heterotetramer with UvrA during the search for lesions. Interacts with UvrC in an incision complex.

The protein resides in the cytoplasm. The UvrABC repair system catalyzes the recognition and processing of DNA lesions. A damage recognition complex composed of 2 UvrA and 2 UvrB subunits scans DNA for abnormalities. Upon binding of the UvrA(2)B(2) complex to a putative damaged site, the DNA wraps around one UvrB monomer. DNA wrap is dependent on ATP binding by UvrB and probably causes local melting of the DNA helix, facilitating insertion of UvrB beta-hairpin between the DNA strands. Then UvrB probes one DNA strand for the presence of a lesion. If a lesion is found the UvrA subunits dissociate and the UvrB-DNA preincision complex is formed. This complex is subsequently bound by UvrC and the second UvrB is released. If no lesion is found, the DNA wraps around the other UvrB subunit that will check the other stand for damage. The protein is UvrABC system protein B of Psychromonas ingrahamii (strain DSM 17664 / CCUG 51855 / 37).